Reading from the N-terminus, the 407-residue chain is Phosphopentomutase (407 aa).

6 residues coordinate Mn(2+): aspartate 10, aspartate 306, histidine 311, aspartate 347, histidine 348, and histidine 359.

The protein belongs to the phosphopentomutase family. It depends on Mn(2+) as a cofactor.

It localises to the cytoplasm. The enzyme catalyses 2-deoxy-alpha-D-ribose 1-phosphate = 2-deoxy-D-ribose 5-phosphate. The catalysed reaction is alpha-D-ribose 1-phosphate = D-ribose 5-phosphate. It participates in carbohydrate degradation; 2-deoxy-D-ribose 1-phosphate degradation; D-glyceraldehyde 3-phosphate and acetaldehyde from 2-deoxy-alpha-D-ribose 1-phosphate: step 1/2. In terms of biological role, isomerase that catalyzes the conversion of deoxy-ribose 1-phosphate (dRib-1-P) and ribose 1-phosphate (Rib-1-P) to deoxy-ribose 5-phosphate (dRib-5-P) and ribose 5-phosphate (Rib-5-P), respectively. The protein is Phosphopentomutase of Erwinia tasmaniensis (strain DSM 17950 / CFBP 7177 / CIP 109463 / NCPPB 4357 / Et1/99).